The sequence spans 521 residues: Proactivator polypeptide-like 1 (521 aa).

Positions Met1–Ala17 are cleaved as a signal peptide. The propeptide occupies Ser18–Ala59. Positions Pro19–Ala59 constitute a Saposin A-type 1 domain. Saposin B-type domains are found at residues Lys60 to Gln144 and Glu180 to Gly258. 3 disulfide bridges follow: Cys64-Cys140, Cys67-Cys134, and Cys95-Cys107. Positions His146–Glu180 are excised as a propeptide. Cystine bridges form between Cys184–Cys254, Cys187–Cys248, and Cys213–Cys224. A glycan (N-linked (GlcNAc...) asparagine) is linked at Asn201. A propeptide spanning residues Ala259–Met288 is cleaved from the precursor. Saposin B-type domains follow at residues Ala290–Arg370 and Gln392–Arg473. 3 cysteine pairs are disulfide-bonded: Cys294–Cys366, Cys297–Cys360, and Cys325–Cys336. Residue Asn311 is glycosylated (N-linked (GlcNAc...) asparagine). The propeptide occupies Arg370–Asn391. Cystine bridges form between Cys396–Cys469, Cys399–Cys463, and Cys427–Cys438. Positions Thr474 to Ala521 are excised as a propeptide. In terms of domain architecture, Saposin A-type 2 spans Pro475–Leu515.

The protein resides in the secreted. In terms of biological role, may activate the lysosomal degradation of sphingolipids. This Homo sapiens (Human) protein is Proactivator polypeptide-like 1 (PSAPL1).